Here is a 401-residue protein sequence, read N- to C-terminus: 8-amino-7-oxononanoate synthase (401 aa).

Arg-24 contributes to the substrate binding site. 111–112 is a pyridoxal 5'-phosphate binding site; that stretch reads GF. His-137 contacts substrate. Ser-183, His-211, and Thr-240 together coordinate pyridoxal 5'-phosphate. Lys-243 carries the post-translational modification N6-(pyridoxal phosphate)lysine. Residue Thr-357 coordinates substrate.

It belongs to the class-II pyridoxal-phosphate-dependent aminotransferase family. BioF subfamily. As to quaternary structure, homodimer. Pyridoxal 5'-phosphate serves as cofactor.

The enzyme catalyses 6-carboxyhexanoyl-[ACP] + L-alanine + H(+) = (8S)-8-amino-7-oxononanoate + holo-[ACP] + CO2. It functions in the pathway cofactor biosynthesis; biotin biosynthesis. In terms of biological role, catalyzes the decarboxylative condensation of pimeloyl-[acyl-carrier protein] and L-alanine to produce 8-amino-7-oxononanoate (AON), [acyl-carrier protein], and carbon dioxide. In Xanthomonas euvesicatoria pv. vesicatoria (strain 85-10) (Xanthomonas campestris pv. vesicatoria), this protein is 8-amino-7-oxononanoate synthase.